The following is a 185-amino-acid chain: Endoribonuclease YbeY (185 aa).

Zn(2+)-binding residues include His-142, His-146, and His-152.

Belongs to the endoribonuclease YbeY family. Zn(2+) serves as cofactor.

The protein resides in the cytoplasm. Single strand-specific metallo-endoribonuclease involved in late-stage 70S ribosome quality control and in maturation of the 3' terminus of the 16S rRNA. This chain is Endoribonuclease YbeY, found in Parvibaculum lavamentivorans (strain DS-1 / DSM 13023 / NCIMB 13966).